The chain runs to 155 residues: Small ribosomal subunit protein uS7c (155 aa).

This sequence belongs to the universal ribosomal protein uS7 family. In terms of assembly, part of the 30S ribosomal subunit.

It localises to the plastid. It is found in the chloroplast. Functionally, one of the primary rRNA binding proteins, it binds directly to 16S rRNA where it nucleates assembly of the head domain of the 30S subunit. This is Small ribosomal subunit protein uS7c (rps7) from Physcomitrium patens (Spreading-leaved earth moss).